The chain runs to 55 residues: Spermatid nuclear transition protein 1 (55 aa).

The span at 1 to 42 (MSTSRKLKSQGTRRGKNRTPHKGVKRGCSKRKYRKSSLKSRK) shows a compositional bias: basic residues. A disordered region spans residues 1–55 (MSTSRKLKSQGTRRGKNRTPHKGVKRGCSKRKYRKSSLKSRKRCDDANRNFRSHL). Ser9, Ser36, Ser37, and Ser40 each carry phosphoserine.

The protein belongs to the nuclear transition protein 1 family. Testis.

It is found in the nucleus. Its subcellular location is the chromosome. Its function is as follows. Plays a key role in the replacement of histones to protamine in the elongating spermatids of mammals. In condensing spermatids, loaded onto the nucleosomes, where it promotes the recruitment and processing of protamines, which are responsible for histone eviction. The sequence is that of Spermatid nuclear transition protein 1 (TNP1) from Ovis aries (Sheep).